A 507-amino-acid chain; its full sequence is ATP synthase subunit alpha, chloroplastic (507 aa).

Glycine 170–threonine 177 contributes to the ATP binding site.

This sequence belongs to the ATPase alpha/beta chains family. In terms of assembly, F-type ATPases have 2 components, CF(1) - the catalytic core - and CF(0) - the membrane proton channel. CF(1) has five subunits: alpha(3), beta(3), gamma(1), delta(1), epsilon(1). CF(0) has four main subunits: a, b, b' and c.

The protein resides in the plastid. It localises to the chloroplast thylakoid membrane. The enzyme catalyses ATP + H2O + 4 H(+)(in) = ADP + phosphate + 5 H(+)(out). In terms of biological role, produces ATP from ADP in the presence of a proton gradient across the membrane. The alpha chain is a regulatory subunit. This is ATP synthase subunit alpha, chloroplastic from Eucalyptus globulus subsp. globulus (Tasmanian blue gum).